A 352-amino-acid chain; its full sequence is MSLSQESGAHHDPQDYPVVSDEEDEIDILGEDDSCSLKSHFYLQPTHSEMGDSGILSPSKLSCTESESDSSGESEGGTSKDSPATPSGGKAKRALVKPPYSYIALITMAILQSPHKKLTLSGICDFISSKFPYYKDKFPAWQNSIRHNLSLNDCFIKIPREPGNPGKGNYWTLDPASEDMFDNGSFLRRRKRFKRHQQEFFKDGLVMYNPLPYYRPYSTIQPQQVLQQTPVACMAIPENLTMPTHLAPYPDIKRKVPYPDQGVHRGFEALDADNHPNKSQSKCSFSIENIMRKPKEPEPSFSTFNPHWNYNHLLQRPNSCLLPAVLNLSTGPLLSNAQGTRQYNLIKFPGCY.

Disordered stretches follow at residues 1–32 (MSLSQESGAHHDPQDYPVVSDEEDEIDILGED) and 47–92 (HSEM…GKAK). The segment covering 20–32 (SDEEDEIDILGED) has biased composition (acidic residues). The segment covering 73 to 82 (ESEGGTSKDS) has biased composition (low complexity). A DNA-binding region (fork-head) is located at residues 97 to 191 (KPPYSYIALI…DNGSFLRRRK (95 aa)).

In terms of tissue distribution, expression begins in the newly forming dorsal mesoderm and is maintained during gastrulation at the dorsal blastopore lip (Spemann organizer). At the early neurula stages, expressed in a row of cells along the dorsal midline that are destined to become the fllor plate of the neural tube. At late neurula, expressed within the anterior and posterior poles of the embryo. After neural closure, expression is detected only in the tailtip, the otic vesicle and at the midbrain/hindbrain boundary.

It localises to the nucleus. Functionally, transcriptional repressor. This is Forkhead box protein D5 from Xenopus tropicalis (Western clawed frog).